The following is a 760-amino-acid chain: Xaa-Pro dipeptidyl-peptidase (760 aa).

Residues Ser-349, Asp-469, and His-499 each act as charge relay system in the active site.

It belongs to the peptidase S15 family. Homodimer.

The protein resides in the cytoplasm. The enzyme catalyses Hydrolyzes Xaa-Pro-|- bonds to release unblocked, N-terminal dipeptides from substrates including Ala-Pro-|-p-nitroanilide and (sequentially) Tyr-Pro-|-Phe-Pro-|-Gly-Pro-|-Ile.. In terms of biological role, removes N-terminal dipeptides sequentially from polypeptides having unsubstituted N-termini provided that the penultimate residue is proline. In Streptococcus pyogenes serotype M6 (strain ATCC BAA-946 / MGAS10394), this protein is Xaa-Pro dipeptidyl-peptidase.